The following is a 112-amino-acid chain: SRA stem-loop-interacting RNA-binding protein, mitochondrial (112 aa).

Ser15 is modified (phosphoserine). The region spanning 19–98 (PIAFVRKIPW…IHVQAQRAKA (80 aa)) is the RRM domain. Thr104 carries the phosphothreonine modification. Ser105 carries the phosphoserine modification.

The protein localises to the mitochondrion. It is found in the nucleus. Functionally, RNA-binding protein that acts as a nuclear receptor corepressor. Probably acts by binding the SRA RNA, and repressing the SRA-mediated nuclear receptor coactivation. Binds the STR7 loop of SRA RNA. Also able to repress glucocorticoid (GR), androgen (AR), thyroid (TR) and VDR-mediated transactivation. The protein is SRA stem-loop-interacting RNA-binding protein, mitochondrial (Slirp) of Mus musculus (Mouse).